A 262-amino-acid polypeptide reads, in one-letter code: Mitochondrial calcium uniporter regulator 1 (262 aa).

Positions 138–175 form a coiled coil; sequence EKSEFSALRTQNEKVKIELQQLKKQLNDSIVKVRASNK. A helical transmembrane segment spans residues 239-261; it reads TIKYLAGSVFTCLTIALGFYRLW.

The protein belongs to the CCDC90 family.

Its subcellular location is the mitochondrion inner membrane. Its function is as follows. Key regulator of mitochondrial calcium uniporter (mcu) required for calcium entry into mitochondrion. The polypeptide is Mitochondrial calcium uniporter regulator 1 (Xenopus tropicalis (Western clawed frog)).